The sequence spans 213 residues: Large ribosomal subunit protein uL3 (213 aa).

The protein belongs to the universal ribosomal protein uL3 family. As to quaternary structure, part of the 50S ribosomal subunit. Forms a cluster with proteins L14 and L19.

Functionally, one of the primary rRNA binding proteins, it binds directly near the 3'-end of the 23S rRNA, where it nucleates assembly of the 50S subunit. In Bifidobacterium longum (strain DJO10A), this protein is Large ribosomal subunit protein uL3.